The following is a 146-amino-acid chain: MLLRKGTVYVLVIRADLVNAMVAHARRDHPDEACGVLAGPEGSDRPERHIPMTNAERSPTFYRLDSGEQLKVWRAMEDADEVPVVIYHSHTATEAYPSRTDVKLATEPDAHYVLVSTRDPHRHELRSYRIVDGAVTEEPVNVVEQY.

An MPN domain is found at 11–134 (LVIRADLVNA…LRSYRIVDGA (124 aa)). Zn(2+) is bound by residues H88, H90, and D101. The JAMM motif motif lies at 88-101 (HSHTATEAYPSRTD).

It belongs to the peptidase M67A family. It depends on Zn(2+) as a cofactor.

It catalyses the reaction [CysO sulfur-carrier protein]-Gly-NH-CH2-C(O)-S-L-Cys + H2O = [CysO sulfur-carrier protein]-C-terminal Gly-Gly + L-cysteine + H(+). It participates in amino-acid biosynthesis; L-cysteine biosynthesis. Functionally, protease that hydrolyzes the covalent CysO-cysteine adduct synthesized by CysM to release L-cysteine and regenerate CysO. The polypeptide is CysO-cysteine peptidase (mec) (Mycobacterium bovis (strain ATCC BAA-935 / AF2122/97)).